A 349-amino-acid polypeptide reads, in one-letter code: L-lactate dehydrogenase (349 aa).

A disordered region spans residues 199–219 (APEGSIIGADGNPTTDASTMF).

Belongs to the LDH2/MDH2 oxidoreductase family.

It localises to the cytoplasm. The catalysed reaction is (S)-lactate + NAD(+) = pyruvate + NADH + H(+). The protein operates within fermentation; pyruvate fermentation to lactate; (S)-lactate from pyruvate: step 1/1. The chain is L-lactate dehydrogenase (ldh) from Cupriavidus necator (strain ATCC 17699 / DSM 428 / KCTC 22496 / NCIMB 10442 / H16 / Stanier 337) (Ralstonia eutropha).